Reading from the N-terminus, the 327-residue chain is Methionyl-tRNA formyltransferase (327 aa).

121–124 provides a ligand contact to (6S)-5,6,7,8-tetrahydrofolate; sequence SLLP.

This sequence belongs to the Fmt family.

It catalyses the reaction L-methionyl-tRNA(fMet) + (6R)-10-formyltetrahydrofolate = N-formyl-L-methionyl-tRNA(fMet) + (6S)-5,6,7,8-tetrahydrofolate + H(+). Functionally, attaches a formyl group to the free amino group of methionyl-tRNA(fMet). The formyl group appears to play a dual role in the initiator identity of N-formylmethionyl-tRNA by promoting its recognition by IF2 and preventing the misappropriation of this tRNA by the elongation apparatus. The chain is Methionyl-tRNA formyltransferase from Burkholderia vietnamiensis (strain G4 / LMG 22486) (Burkholderia cepacia (strain R1808)).